The sequence spans 89 residues: Mitochondrial import inner membrane translocase subunit Tim9 (89 aa).

The residue at position 2 (Ala2) is an N-acetylalanine. Positions 28–52 (CFLDCVKDFTTREVKPEEVTCSEHC) match the Twin CX3C motif motif. Disulfide bonds link Cys28/Cys52 and Cys32/Cys48.

Belongs to the small Tim family. In terms of assembly, heterohexamer; composed of 3 copies of TIMM9 and 3 copies of TIMM10/TIM10A, named soluble 70 kDa complex. The complex forms a 6-bladed alpha-propeller structure and associates with the TIMM22 component of the TIM22 complex. Interacts with multi-pass transmembrane proteins in transit. Also forms a complex composed of TIMM9, TIMM10/TIM10A and FXC1/TIM10B.

It is found in the mitochondrion inner membrane. In terms of biological role, mitochondrial intermembrane chaperone that participates in the import and insertion of multi-pass transmembrane proteins into the mitochondrial inner membrane. May also be required for the transfer of beta-barrel precursors from the TOM complex to the sorting and assembly machinery (SAM complex) of the outer membrane. Acts as a chaperone-like protein that protects the hydrophobic precursors from aggregation and guide them through the mitochondrial intermembrane space. The protein is Mitochondrial import inner membrane translocase subunit Tim9 (Timm9) of Rattus norvegicus (Rat).